The following is a 463-amino-acid chain: Lipase 6 (463 aa).

Residues 1-16 (MRDLILFLSLLHTIFA) form the signal peptide. An intrachain disulfide couples cysteine 112 to cysteine 285. The Charge relay system role is filled by serine 196. Residue asparagine 231 is glycosylated (N-linked (GlcNAc...) asparagine). Active-site charge relay system residues include aspartate 348 and histidine 381. A disulfide bond links cysteine 364 and cysteine 409. An N-linked (GlcNAc...) asparagine glycan is attached at asparagine 422.

The protein belongs to the AB hydrolase superfamily. Lipase family. Class Lip subfamily.

The protein localises to the secreted. It catalyses the reaction a triacylglycerol + H2O = a diacylglycerol + a fatty acid + H(+). Functionally, secreted lipase that is able to hydrolyze both the neutral triacylglycerols and the monopalmitate ester Tween 40, allowing the use of hydrolyzed products as carbon sources. Has broad lipolytic activity, which may be important for colonization and subsequent infection, therefore contributing to the persistence and virulence in human tissue. The sequence is that of Lipase 6 from Candida albicans (strain SC5314 / ATCC MYA-2876) (Yeast).